We begin with the raw amino-acid sequence, 627 residues long: Neuronal acetylcholine receptor subunit alpha-4 (627 aa).

The first 28 residues, 1-28, serve as a signal peptide directing secretion; that stretch reads MELGGPGAPRLLPPLLLLLGTGLLRASS. Residues 29-242 lie on the Extracellular side of the membrane; the sequence is HVETRAHAEE…ITYAFVIRRL (214 aa). A glycan (N-linked (GlcNAc...) asparagine) is linked at Asn-57. The Ca(2+) site is built by Val-76 and Glu-78. N-linked (GlcNAc...) asparagine glycosylation is found at Asn-107 and Asn-174. 2 disulfides stabilise this stretch: Cys-161–Cys-175 and Cys-225–Cys-226. The helical transmembrane segment at 243–267 threads the bilayer; sequence PLFYTINLIIPCLLISCLTVLVFYL. Cys-271 is lipidated: S-palmitoyl cysteine. The next 2 helical transmembrane spans lie at 275–293 and 309–330; these read ITLC…LLIT and YLLF…VLNV. Residues 331-600 are Cytoplasmic-facing; that stretch reads HHRSPRTHTM…WKYVAMVIDR (270 aa). 2 disordered regions span residues 382 to 479 and 497 to 559; these read PRFW…EAVE and DATS…RHLP. Phosphoserine is present on residues Ser-424, Ser-538, and Ser-541. A helical membrane pass occupies residues 601-619; sequence IFLWMFIIVCLLGTVGLFL.

It belongs to the ligand-gated ion channel (TC 1.A.9) family. Acetylcholine receptor (TC 1.A.9.1) subfamily. Alpha-4/CHRNA4 sub-subfamily. In terms of assembly, neuronal AChR is composed of two different types of subunits: alpha and beta. CHRNA4 forms heteropentameric neuronal acetylcholine receptors with CHRNB2 and CHRNB4, as well as CHRNA5 and CHRNB3 as accesory subunits. Found in two major stoichiometric forms, LS (low agonist sensitivity): (CHRNA4)3:(CHRNB2)2 and HS (high agonist sensitivity): (CHRNA4)2:(CHRNB2)3, the two stoichiometric forms differ in their unitary conductance, calcium permeability, ACh sensitivity and potentiation by divalent cation. Cells produce predominantly an (CHRNA4)3:(CHRNB2)2 nAChR. The (CHRNA4)2:(CHRNB2)3 expression is selectively up-regulated by nicotine and has lower single channel conductance and calcium permeability. In the striatum, also forms CHRNA4:CHRNA6:CHRNB2 complexes. Also found in the stoichiometric form: (CHRNA4:CHRNB2)2:CHRNB3. Interacts with RIC3; which is required for proper folding and assembly. Interacts with LYPD6.

It is found in the synaptic cell membrane. The protein localises to the cell membrane. It catalyses the reaction Ca(2+)(in) = Ca(2+)(out). The enzyme catalyses K(+)(in) = K(+)(out). The catalysed reaction is Na(+)(in) = Na(+)(out). With respect to regulation, activated by a myriad of ligands such as acetylcholine, cytisine, nicotine, choline and epibatidine. Channel potentiation by calcium is stoichiometry-selective, CHRNA4:CHRNB2 nACh receptor is achieved by calcium association with topographically distinct sites framed by anionic residues within the CHRNA4 subunit and between the CHRNA4 and CHRNB2 subunits. nAChR activity is inhibited by the antagonist alpha-conotoxins BuIA, PnIA, GID and MII, small disulfide-constrained peptides from cone snails. Functionally, component of neuronal acetylcholine receptors (nAChRs) that function as pentameric, ligand-gated cation channels with high calcium permeability among other activities. nAChRs are excitatory neurotrasnmitter receptors formed by a collection of nAChR subunits known to mediate synaptic transmission in the nervous system and the neuromuscular junction. Each nAchR subunit confers differential attributes to channel properties, including activation, deactivation and desensitization kinetics, pH sensitivity, cation permeability, and binding to allosteric modulators. CHRNA4 forms heteropentameric neuronal acetylcholine receptors with CHRNB2 and CHRNB4, as well as CHRNA5 and CHRNB3 as accesory subunits. Is the most abundant nAChR subtype expressed in the central nervous system. Found in two major stoichiometric forms,(CHRNA4)3:(CHRNB2)2 and (CHRNA4)2:(CHRNB2)3, the two stoichiometric forms differ in their unitary conductance, calcium permeability, ACh sensitivity and potentiation by divalent cation. Involved in the modulation of calcium-dependent signaling pathways, influences the release of neurotransmitters, including dopamine, glutamate and GABA. The polypeptide is Neuronal acetylcholine receptor subunit alpha-4 (CHRNA4) (Pan troglodytes (Chimpanzee)).